A 114-amino-acid chain; its full sequence is Probable 4-amino-4-deoxy-L-arabinose-phosphoundecaprenol flippase subunit ArnE (114 aa).

2 helical membrane passes run 41–61 and 68–88; these read GWLW…LLVL and VAYP…HFVF. Residues 43–112 form the EamA domain; the sequence is LWLALFSLGL…VIGGVLLLSR (70 aa).

This sequence belongs to the ArnE family. As to quaternary structure, heterodimer of ArnE and ArnF.

The protein localises to the cell inner membrane. The protein operates within bacterial outer membrane biogenesis; lipopolysaccharide biosynthesis. Translocates 4-amino-4-deoxy-L-arabinose-phosphoundecaprenol (alpha-L-Ara4N-phosphoundecaprenol) from the cytoplasmic to the periplasmic side of the inner membrane. This is Probable 4-amino-4-deoxy-L-arabinose-phosphoundecaprenol flippase subunit ArnE from Pseudomonas fluorescens (strain ATCC BAA-477 / NRRL B-23932 / Pf-5).